We begin with the raw amino-acid sequence, 352 residues long: Probable cytosolic iron-sulfur protein assembly protein CIAO1 homolog (352 aa).

7 WD repeats span residues 14-53 (GHDD…PSEQ), 63-102 (CHTR…WEQV), 107-146 (GHEN…EFEC), 152-191 (GHSQ…WGCA), 200-240 (GHES…TSTP), 268-306 (HHRR…LTQP), and 319-352 (AHGA…WWLR).

Belongs to the WD repeat CIA1 family.

Its function is as follows. Essential component of the cytosolic iron-sulfur (Fe/S) protein assembly machinery. Required for the maturation of extramitochondrial Fe/S proteins. This chain is Probable cytosolic iron-sulfur protein assembly protein CIAO1 homolog, found in Chlamydomonas reinhardtii (Chlamydomonas smithii).